Reading from the N-terminus, the 260-residue chain is O-antigen export system permease protein RfbA (260 aa).

Transmembrane regions (helical) follow at residues 31–51 (FLGF…YVLL), 63–83 (FPFF…SVGG), 109–129 (VVVT…VLGM), 139–159 (VVLF…LTYI), 173–193 (IVSN…PLST), 201–221 (SLML…AIFY), and 229–249 (EPLM…SSIF). In terms of domain architecture, ABC transmembrane type-2 spans 32-252 (LGFLWTFLNP…WAASSIFESR (221 aa)).

The protein belongs to the ABC-2 integral membrane protein family.

Its subcellular location is the cell inner membrane. In terms of biological role, may form an ATP-driven O-antigen export apparatus, in association with RfbB. This is O-antigen export system permease protein RfbA (rfbA) from Myxococcus xanthus.